We begin with the raw amino-acid sequence, 103 residues long: MAVQQKIRIKLKSYDHSLVDKWALRIIDVVKQTDAIIFGPIPLPTKAHIYTVNRSPHVDKKSREQFSFSSHKRLIEIINPTTRTIDMLMKLELPSGVDVEIKS.

The protein belongs to the universal ribosomal protein uS10 family. Part of the 30S ribosomal subunit.

Involved in the binding of tRNA to the ribosomes. The polypeptide is Small ribosomal subunit protein uS10 (Chlorobium limicola (strain DSM 245 / NBRC 103803 / 6330)).